A 24-amino-acid polypeptide reads, in one-letter code: Humanin-like 1 (24 aa).

The protein belongs to the humanin family. As to expression, highly expressed in the kidney, heart muscle and testis.

Its subcellular location is the secreted. It is found in the cytoplasm. Functionally, plays a role as a neuroprotective and antiapoptotic factor. This is Humanin-like 1 from Homo sapiens (Human).